The following is a 316-amino-acid chain: Secondary metabolism regulator laeA (316 aa).

The protein belongs to the methyltransferase superfamily. LaeA methyltransferase family. In terms of assembly, component of the heterotrimeric velvet complex composed of laeA, ve1 and velB; Ve1 acting as a bridging protein between laeA and velB. Interacts directly with veA.

It localises to the nucleus. The protein localises to the cytoplasm. It catalyses the reaction L-methionyl-[protein] + S-adenosyl-L-methionine = S-methyl-L-methionyl-[protein] + S-adenosyl-L-homocysteine. Its function is as follows. Methyltransferase that performs automethylation. No other methyl-accepting substrate has been identified yet. Component of the velvet transcription factor complex that acts as a global regulator for secondary metabolite gene expression. Controls the expression of the mycotoxins trichothecenes and zearalenon gene clusters. Negatively controls perithecial induction, but positively controls virulence toward the host plant. This Gibberella zeae (strain ATCC MYA-4620 / CBS 123657 / FGSC 9075 / NRRL 31084 / PH-1) (Wheat head blight fungus) protein is Secondary metabolism regulator laeA.